The chain runs to 527 residues: Secologanin synthase 2 (527 aa).

Over 1–11 (MEMDMDIIRKA) the chain is Lumenal. A helical membrane pass occupies residues 12–32 (IAATIFALVMAWAWRVLDWAW). Topologically, residues 33-527 (FTPKRIEKRL…IYKKLERQNF (495 aa)) are cytoplasmic. Cys-470 contacts heme.

The protein belongs to the cytochrome P450 family. Heme serves as cofactor. In terms of tissue distribution, expressed in leaves (especially in leaf epidermis), and, to a lower extent, in roots, stems, flower buds and flowers.

The protein localises to the endoplasmic reticulum membrane. It catalyses the reaction loganin + reduced [NADPH--hemoprotein reductase] + O2 = secologanin + oxidized [NADPH--hemoprotein reductase] + 2 H2O + H(+). It carries out the reaction secologanin + reduced [NADPH--hemoprotein reductase] + O2 = secoxyloganin + oxidized [NADPH--hemoprotein reductase] + H2O + 2 H(+). Its pathway is alkaloid biosynthesis. In terms of biological role, component of the seco-iridoid and derivatives monoterpenoid indole alkaloids (MIAs, e.g. secologanin) biosynthesis pathway. Catalyzes the conversion of loganin into secologanin. Catalyzes the conversion of secologanin into secoxyloganin. The chain is Secologanin synthase 2 from Catharanthus roseus (Madagascar periwinkle).